The primary structure comprises 381 residues: Chaperone protein DnaJ (381 aa).

In terms of domain architecture, J spans 5-70 (DYYEVLGCDR…QKRGAYDRYG (66 aa)). The CR-type zinc finger occupies 136–214 (GKTAQISIPT…CGGAGRVTRE (79 aa)). 8 residues coordinate Zn(2+): Cys-149, Cys-152, Cys-166, Cys-169, Cys-188, Cys-191, Cys-202, and Cys-205. CXXCXGXG motif repeat units lie at residues 149 to 156 (CEVCSGSG), 166 to 173 (CRTCNGAG), 188 to 195 (CPSCQGRG), and 202 to 209 (CPNCGGAG).

This sequence belongs to the DnaJ family. Homodimer. Requires Zn(2+) as cofactor.

The protein localises to the cytoplasm. Its function is as follows. Participates actively in the response to hyperosmotic and heat shock by preventing the aggregation of stress-denatured proteins and by disaggregating proteins, also in an autonomous, DnaK-independent fashion. Unfolded proteins bind initially to DnaJ; upon interaction with the DnaJ-bound protein, DnaK hydrolyzes its bound ATP, resulting in the formation of a stable complex. GrpE releases ADP from DnaK; ATP binding to DnaK triggers the release of the substrate protein, thus completing the reaction cycle. Several rounds of ATP-dependent interactions between DnaJ, DnaK and GrpE are required for fully efficient folding. Also involved, together with DnaK and GrpE, in the DNA replication of plasmids through activation of initiation proteins. This Azorhizobium caulinodans (strain ATCC 43989 / DSM 5975 / JCM 20966 / LMG 6465 / NBRC 14845 / NCIMB 13405 / ORS 571) protein is Chaperone protein DnaJ.